A 122-amino-acid chain; its full sequence is Large ribosomal subunit protein uL14 (122 aa).

Belongs to the universal ribosomal protein uL14 family. As to quaternary structure, part of the 50S ribosomal subunit. Forms a cluster with proteins L3 and L19. In the 70S ribosome, L14 and L19 interact and together make contacts with the 16S rRNA in bridges B5 and B8.

In terms of biological role, binds to 23S rRNA. Forms part of two intersubunit bridges in the 70S ribosome. This is Large ribosomal subunit protein uL14 from Clavibacter michiganensis subsp. michiganensis (strain NCPPB 382).